A 175-amino-acid chain; its full sequence is Translation initiation factor IF-3, chloroplastic (175 aa).

The protein belongs to the IF-3 family. In terms of assembly, monomer.

It is found in the plastid. The protein localises to the chloroplast. Its function is as follows. IF-3 binds to the 30S ribosomal subunit and shifts the equilibrium between 70S ribosomes and their 50S and 30S subunits in favor of the free subunits, thus enhancing the availability of 30S subunits on which protein synthesis initiation begins. The sequence is that of Translation initiation factor IF-3, chloroplastic from Cyanidioschyzon merolae (strain NIES-3377 / 10D) (Unicellular red alga).